A 434-amino-acid chain; its full sequence is N-lysine methyltransferase SMYD2-B (434 aa).

Residues 8–242 (PGIEQFASPG…PGQEIYTSYI (235 aa)) form the SET domain. 18–20 (KGR) lines the S-adenosyl-L-methionine pocket. Residues Cys53, Cys56, Cys66, Cys69, Cys75, Cys79, His87, and Cys91 each coordinate Zn(2+). The MYND-type zinc-finger motif lies at 53–91 (CEQCFTRKKGLAKCGKCKKAFYCNANCQKKNWPMHKLEC). S-adenosyl-L-methionine-binding positions include His138, 207–208 (NH), and 259–261 (YYF).

The protein belongs to the class V-like SAM-binding methyltransferase superfamily.

It is found in the cytoplasm. It localises to the cytosol. The protein localises to the nucleus. It catalyses the reaction L-lysyl(4)-[histone H3] + 3 S-adenosyl-L-methionine = N(6),N(6),N(6)-trimethyl-L-lysyl(4)-[histone H3] + 3 S-adenosyl-L-homocysteine + 3 H(+). The catalysed reaction is L-lysyl-[protein] + S-adenosyl-L-methionine = N(6)-methyl-L-lysyl-[protein] + S-adenosyl-L-homocysteine + H(+). Its function is as follows. Protein-lysine N-methyltransferase that methylates both histones and non-histone proteins, including p53/TP53 and RB1. Specifically trimethylates histone H3 'Lys-4' (H3K4me3) in vivo. The activity requires interaction with HSP90alpha. Shows even higher methyltransferase activity on p53/TP53. Monomethylates 'Lys-370' of p53/TP53, leading to decreased DNA-binding activity and subsequent transcriptional regulation activity of p53/TP53. Monomethylates RB1 at 'Lys-860'. In Danio rerio (Zebrafish), this protein is N-lysine methyltransferase SMYD2-B (smyd2b).